Reading from the N-terminus, the 117-residue chain is Carboxysome shell protein CcmK4 (117 aa).

Residues 5–91 (AVGSLETKGF…PHENVECVLP (87 aa)) form the BMC domain.

It belongs to the bacterial microcompartments protein family. CcmK subfamily. As to quaternary structure, crystallizes as a homohexamer. Interacts stably with CcmK3, forming heterohexamers that can make dodecamers. Heterohexamers have a 1:2 CcmK3:CcmK4 stoichiometry. Upon expression in E.coli forms large aggregates.

Its subcellular location is the carboxysome. A probably essential, minor shell protein of the carboxysome, a polyhedral inclusion where RuBisCO (ribulose bisphosphate carboxylase, rbcL-rbcS) is sequestered. Hexamers form sheets that form the facets of the polyhedral carboxysome. In PCC 7418 there are several CcmK paralogs with presumably functional differences. This subunit can probably make both homohexamers and heterohexamers with CcmK3. Both hexamers can also make dodecamers, formation depends on buffer conditions. The polypeptide is Carboxysome shell protein CcmK4 (Halothece sp. (strain PCC 7418) (Synechococcus sp. (strain PCC 7418))).